The chain runs to 338 residues: Aspartate-semialdehyde dehydrogenase (338 aa).

NADP(+) is bound by residues 9 to 12 (TGQV) and 37 to 38 (RS). Arginine 93 is a phosphate binding site. The active-site Acyl-thioester intermediate is cysteine 123. Substrate is bound at residue glutamine 150. Residue 153–154 (SG) participates in NADP(+) binding. Lysine 220 contributes to the phosphate binding site. Residue arginine 242 coordinates substrate. Histidine 249 acts as the Proton acceptor in catalysis. Residue asparagine 316 coordinates NADP(+).

The protein belongs to the aspartate-semialdehyde dehydrogenase family. In terms of assembly, homodimer.

The catalysed reaction is L-aspartate 4-semialdehyde + phosphate + NADP(+) = 4-phospho-L-aspartate + NADPH + H(+). It functions in the pathway amino-acid biosynthesis; L-lysine biosynthesis via DAP pathway; (S)-tetrahydrodipicolinate from L-aspartate: step 2/4. It participates in amino-acid biosynthesis; L-methionine biosynthesis via de novo pathway; L-homoserine from L-aspartate: step 2/3. Its pathway is amino-acid biosynthesis; L-threonine biosynthesis; L-threonine from L-aspartate: step 2/5. Its function is as follows. Catalyzes the NADPH-dependent formation of L-aspartate-semialdehyde (L-ASA) by the reductive dephosphorylation of L-aspartyl-4-phosphate. The sequence is that of Aspartate-semialdehyde dehydrogenase from Streptomyces akiyoshiensis.